Reading from the N-terminus, the 337-residue chain is Dolichyl-phosphate beta-glucosyltransferase ALG5C (337 aa).

Topologically, residues 1-6 (MNDLPP) are lumenal. The helical transmembrane segment at 7–27 (IANLISNILFVLLIITFLYAL) threads the bilayer. At 28–337 (CSRFVSDKTL…ADTPISDFEV (310 aa)) the chain is on the cytoplasmic side.

Belongs to the glycosyltransferase 2 family.

The protein localises to the endoplasmic reticulum membrane. The enzyme catalyses a di-trans,poly-cis-dolichyl phosphate + UDP-alpha-D-glucose = a di-trans,poly-cis-dolichyl beta-D-glucosyl phosphate + UDP. Its pathway is protein modification; protein glycosylation. In terms of biological role, dolichyl-phosphate beta-glucosyltransferase involved in the glycosylation of glycoproteins through the synthesis of dolichyl beta-D-glucosyl phosphate which serves as a sugar donor for transfer of three glucose residues to the Man-9-GlcNAc-2-PP-dolichol precursor to N-glycans. This is Dolichyl-phosphate beta-glucosyltransferase ALG5C from Trichomonas vaginalis (strain ATCC PRA-98 / G3).